Consider the following 845-residue polypeptide: Molybdenum cofactor sulfurase (845 aa).

Lys240 bears the N6-(pyridoxal phosphate)lysine mark. The active site involves Cys404. One can recognise an MOSC domain in the interval 666-840 (SFPQDSSPSS…LMVGDTVTPS (175 aa)).

Belongs to the class-V pyridoxal-phosphate-dependent aminotransferase family. MOCOS subfamily. Requires pyridoxal 5'-phosphate as cofactor.

The catalysed reaction is Mo-molybdopterin + L-cysteine + AH2 = thio-Mo-molybdopterin + L-alanine + A + H2O. The protein operates within cofactor biosynthesis; molybdopterin biosynthesis. Its function is as follows. Sulfurates the molybdenum cofactor. Sulfation of molybdenum is essential for xanthine dehydrogenase (XDH) and aldehyde oxidase (ADO) enzymes in which molybdenum cofactor is liganded by 1 oxygen and 1 sulfur atom in active form. The sequence is that of Molybdenum cofactor sulfurase from Aspergillus clavatus (strain ATCC 1007 / CBS 513.65 / DSM 816 / NCTC 3887 / NRRL 1 / QM 1276 / 107).